The following is a 363-amino-acid chain: Histone-lysine N-methyltransferase ASHH3 (363 aa).

One can recognise an AWS domain in the interval 63–114 (DDGIFCSCSSSSPGSSSTVCGSNCHCGMLFSSCSSSCKCGSECNNKPFQQRH). Residues 116–233 (KKMKLIQTEK…KGEHLTYDYQ (118 aa)) form the SET domain. The region spanning 239 to 255 (ADQDCHCGAVGCRRKLG) is the Post-SET domain.

The protein belongs to the class V-like SAM-binding methyltransferase superfamily. Histone-lysine methyltransferase family. SET2 subfamily.

Its subcellular location is the nucleus. It is found in the chromosome. The protein localises to the centromere. The catalysed reaction is L-lysyl-[histone] + S-adenosyl-L-methionine = N(6)-methyl-L-lysyl-[histone] + S-adenosyl-L-homocysteine + H(+). Histone methyltransferase. The chain is Histone-lysine N-methyltransferase ASHH3 (ASHH3) from Arabidopsis thaliana (Mouse-ear cress).